A 139-amino-acid chain; its full sequence is MLSPRRTKFRKQQRGRMKGLASRGNTINFGDFGLQATEPCWITSRQIEAARRAITRYVRRGGKIWIRIFPDKPITMRPAETRMGSGKGSPEFWVAVVKPGRIMFEIAGVSEEIAREAMRLAAQKLPIKTKFVGREEEYN.

This sequence belongs to the universal ribosomal protein uL16 family. In terms of assembly, part of the 50S ribosomal subunit.

Binds 23S rRNA and is also seen to make contacts with the A and possibly P site tRNAs. This is Large ribosomal subunit protein uL16 from Gloeothece citriformis (strain PCC 7424) (Cyanothece sp. (strain PCC 7424)).